A 449-amino-acid polypeptide reads, in one-letter code: Probable glycine dehydrogenase (decarboxylating) subunit 1 (449 aa).

The protein belongs to the GcvP family. N-terminal subunit subfamily. In terms of assembly, the glycine cleavage system is composed of four proteins: P, T, L and H. In this organism, the P 'protein' is a heterodimer of two subunits.

The catalysed reaction is N(6)-[(R)-lipoyl]-L-lysyl-[glycine-cleavage complex H protein] + glycine + H(+) = N(6)-[(R)-S(8)-aminomethyldihydrolipoyl]-L-lysyl-[glycine-cleavage complex H protein] + CO2. The glycine cleavage system catalyzes the degradation of glycine. The P protein binds the alpha-amino group of glycine through its pyridoxal phosphate cofactor; CO(2) is released and the remaining methylamine moiety is then transferred to the lipoamide cofactor of the H protein. This is Probable glycine dehydrogenase (decarboxylating) subunit 1 from Oceanobacillus iheyensis (strain DSM 14371 / CIP 107618 / JCM 11309 / KCTC 3954 / HTE831).